Consider the following 71-residue polypeptide: Large ribosomal subunit protein uL29 (71 aa).

It belongs to the universal ribosomal protein uL29 family.

This chain is Large ribosomal subunit protein uL29, found in Methanocella arvoryzae (strain DSM 22066 / NBRC 105507 / MRE50).